A 291-amino-acid chain; its full sequence is MNLYLQLDLYLYNDNLYLYLYLESGVVPIPSPLEQFEIIPFLPMKIGDLYFSFTNPSLFMLLTLSLVLLLVHFVTKKGGGKSVPNAWQSLVELIYDFVPNLVNEQIGGLSGNVKQQFFPCIFVTFTFLLFCNLQGMIPYSFTVTSHFLITLGLSFSIFIGITIVGFQRNGLHFLSFLLPAGVPLPLAPFLVLLELISYCFRALSLGIRLFANMMAGHSLVKILSGFAWTMLCMNDLLYFIGDLGPLFIVLALTGPELGVAISQAHVSTISICIYLNDATNLHQTCLLFIYN.

The next 6 helical transmembrane spans lie at 51 to 71, 117 to 137, 146 to 166, 173 to 193, 213 to 233, and 239 to 259; these read FSFT…LLLV, FFPC…QGMI, HFLI…IVGF, FLSF…LVLL, MMAG…MLCM, and FIGD…ELGV.

It belongs to the ATPase A chain family. In terms of assembly, F-type ATPases have 2 components, CF(1) - the catalytic core - and CF(0) - the membrane proton channel. CF(1) has five subunits: alpha(3), beta(3), gamma(1), delta(1), epsilon(1). CF(0) has three main subunits: a, b and c.

The protein resides in the mitochondrion inner membrane. In terms of biological role, mitochondrial membrane ATP synthase (F(1)F(0) ATP synthase or Complex V) produces ATP from ADP in the presence of a proton gradient across the membrane which is generated by electron transport complexes of the respiratory chain. F-type ATPases consist of two structural domains, F(1) - containing the extramembraneous catalytic core and F(0) - containing the membrane proton channel, linked together by a central stalk and a peripheral stalk. During catalysis, ATP synthesis in the catalytic domain of F(1) is coupled via a rotary mechanism of the central stalk subunits to proton translocation. Key component of the proton channel; it may play a direct role in the translocation of protons across the membrane. The protein is ATP synthase subunit a (ATP6) of Vicia faba (Broad bean).